The following is a 127-amino-acid chain: UPF0325 protein VP2321 (127 aa).

It belongs to the UPF0325 family.

The chain is UPF0325 protein VP2321 from Vibrio parahaemolyticus serotype O3:K6 (strain RIMD 2210633).